The following is a 427-amino-acid chain: 3-phosphoshikimate 1-carboxyvinyltransferase (427 aa).

3-phosphoshikimate contacts are provided by Lys-22, Ser-23, and Arg-27. Lys-22 provides a ligand contact to phosphoenolpyruvate. Gly-96 and Arg-124 together coordinate phosphoenolpyruvate. Ser-169, Ser-170, Gln-171, Ser-197, Asp-313, Asn-336, and Lys-340 together coordinate 3-phosphoshikimate. Gln-171 lines the phosphoenolpyruvate pocket. The Proton acceptor role is filled by Asp-313. Arg-344, Arg-386, and Lys-411 together coordinate phosphoenolpyruvate.

Belongs to the EPSP synthase family. In terms of assembly, monomer.

The protein localises to the cytoplasm. The enzyme catalyses 3-phosphoshikimate + phosphoenolpyruvate = 5-O-(1-carboxyvinyl)-3-phosphoshikimate + phosphate. Its pathway is metabolic intermediate biosynthesis; chorismate biosynthesis; chorismate from D-erythrose 4-phosphate and phosphoenolpyruvate: step 6/7. Functionally, catalyzes the transfer of the enolpyruvyl moiety of phosphoenolpyruvate (PEP) to the 5-hydroxyl of shikimate-3-phosphate (S3P) to produce enolpyruvyl shikimate-3-phosphate and inorganic phosphate. This Shigella dysenteriae protein is 3-phosphoshikimate 1-carboxyvinyltransferase.